The sequence spans 200 residues: MEKGLSSDLIIAFVAIVLHVVNYNVTAQFEYKTRYFTKLIGRNAIYYYAVFLIISALIRDHFINVAVLSDKDSIILFPTEIANMIGDSCFIFGILLNIWTLKALGIKGMYNGDSFGHIMDSPVTGGPYQFFSDPQYVGTTIAALGVAIRNQSIYGFLCTILVGVVFYISATFVETPHLKNIYSNRSYSKINFKNLKSLKN.

Residues 1–8 (MEKGLSSD) lie on the Lumenal side of the membrane. The segment at residues 9-29 (LIIAFVAIVLHVVNYNVTAQF) is an intramembrane region (helical). The Lumenal segment spans residues 30-39 (EYKTRYFTKL). The helical transmembrane segment at 40-58 (IGRNAIYYYAVFLIISALI) threads the bilayer. Residues 59 to 86 (RDHFINVAVLSDKDSIILFPTEIANMIG) are Cytoplasmic-facing. The helical transmembrane segment at 87–107 (DSCFIFGILLNIWTLKALGIK) threads the bilayer. 91-93 (IFG) lines the S-adenosyl-L-methionine pocket. Over 108 to 150 (GMYNGDSFGHIMDSPVTGGPYQFFSDPQYVGTTIAALGVAIRN) the chain is Lumenal. A helical transmembrane segment spans residues 151–171 (QSIYGFLCTILVGVVFYISAT). Over 172–200 (FVETPHLKNIYSNRSYSKINFKNLKSLKN) the chain is Cytoplasmic. 174 to 175 (ET) serves as a coordination point for S-adenosyl-L-methionine.

The protein belongs to the class VI-like SAM-binding methyltransferase superfamily. PEMT/PEM2 methyltransferase family.

The protein localises to the endoplasmic reticulum membrane. It is found in the mitochondrion membrane. The catalysed reaction is a 1,2-diacyl-sn-glycero-3-phospho-N-methylethanolamine + S-adenosyl-L-methionine = a 1,2-diacyl-sn-glycero-3-phospho-N,N-dimethylethanolamine + S-adenosyl-L-homocysteine + H(+). It catalyses the reaction a 1,2-diacyl-sn-glycero-3-phospho-N,N-dimethylethanolamine + S-adenosyl-L-methionine = a 1,2-diacyl-sn-glycero-3-phosphocholine + S-adenosyl-L-homocysteine + H(+). It carries out the reaction a 1,2-diacyl-sn-glycero-3-phosphoethanolamine + S-adenosyl-L-methionine = a 1,2-diacyl-sn-glycero-3-phospho-N-methylethanolamine + S-adenosyl-L-homocysteine + H(+). Its pathway is phospholipid metabolism; phosphatidylcholine biosynthesis. Catalyzes the three sequential steps of the methylation pathway of phosphatidylcholine biosynthesis, the SAM-dependent methylation of phosphatidylethanolamine (PE) to phosphatidylmonomethylethanolamine (PMME), PMME to phosphatidyldimethylethanolamine (PDME), and PDME to phosphatidylcholine (PC). This chain is Phosphatidylethanolamine N-methyltransferase B (pemtB), found in Dictyostelium discoideum (Social amoeba).